A 277-amino-acid polypeptide reads, in one-letter code: Insertion element IS407 uncharacterized 31.7 kDa protein (277 aa).

The Integrase catalytic domain maps to 103–264 (LPGAPNEVWS…APSEFAAKHR (162 aa)).

This Burkholderia multivorans (strain ATCC 17616 / 249) protein is Insertion element IS407 uncharacterized 31.7 kDa protein.